The primary structure comprises 310 residues: Transcription initiation factor TFIID subunit 8 (310 aa).

The tract at residues 1-30 (MADAAATAGAGGSGTRSGSKQSTNPADNYH) is disordered. Position 2 is an N-acetylalanine (Ala2). Positions 35–102 (RTLQVVVSSL…IVVTLVEMGF (68 aa)) constitute a Histone-fold; involved in forming hexamer structure in TFIID complex domain. Thr130 bears the Phosphothreonine mark. A disordered region spans residues 262–310 (DSGAEKENTSVLQQNPSLSGSRNGEENIIDNPYLRPVKKPKIRRKKSLS). Positions 270 to 283 (TSVLQQNPSLSGSR) are enriched in polar residues. Ser271 is modified (phosphoserine). Positions 294 to 307 (YLRPVKKPKIRRKK) match the Nuclear localization signal motif. Residues 297–310 (PVKKPKIRRKKSLS) show a composition bias toward basic residues.

This sequence belongs to the TAF8 family. In terms of assembly, component of the TFIID basal transcription factor complex, composed of TATA-box-binding protein TBP, and a number of TBP-associated factors (TAFs), including TAF1, TAF2, TAF3, TAF4, TAF5, TAF6, TAF7, TAF8, TAF9, TAF10, TAF11, TAF12 and TAF13. Interacts with TBP, TAF1, TAF6, TAF10, TAF11 and TAF13. Component also of a small TAF complex (SMAT) containing TAF8, TAF10 and SUPT7L. Forms a heterodimer with TAF10. Interaction with TAF10 is mediated mainly via its histone fold domain while interaction with SUPT7L is via its C-terminal region.

It is found in the nucleus. The protein localises to the cytoplasm. Functionally, the TFIID basal transcription factor complex plays a major role in the initiation of RNA polymerase II (Pol II)-dependent transcription. TFIID recognizes and binds promoters with or without a TATA box via its subunit TBP, a TATA-box-binding protein, and promotes assembly of the pre-initiation complex (PIC). The TFIID complex consists of TBP and TBP-associated factors (TAFs), including TAF1, TAF2, TAF3, TAF4, TAF5, TAF6, TAF7, TAF8, TAF9, TAF10, TAF11, TAF12 and TAF13. The TFIID complex structure can be divided into 3 modules TFIID-A, TFIID-B, and TFIID-C. TAF8 is involved in forming the TFIID-B module, together with TAF5. Mediates both basal and activator-dependent transcription. Plays a role in the differentiation of preadipocyte fibroblasts to adipocytes, however, does not seem to play a role in differentiation of myoblasts. Required for the integration of TAF10 in the TAF complex. May be important for survival of cells of the inner cell mass which constitute the pluripotent cell population of the early embryo. The polypeptide is Transcription initiation factor TFIID subunit 8 (TAF8) (Homo sapiens (Human)).